Here is an 89-residue protein sequence, read N- to C-terminus: MAKKSKIAKEMKREKLVNQYYELRKELKAKGDYEALRKLPRDSSPTRLTRRCKVTGRPRGVLRKFEMSRIAFREHAHKGQIPGVKKSSW.

The protein belongs to the universal ribosomal protein uS14 family. Part of the 30S ribosomal subunit. Contacts proteins S3 and S10.

In terms of biological role, binds 16S rRNA, required for the assembly of 30S particles and may also be responsible for determining the conformation of the 16S rRNA at the A site. The sequence is that of Small ribosomal subunit protein uS14A from Staphylococcus haemolyticus (strain JCSC1435).